Here is an 86-residue protein sequence, read N- to C-terminus: U15-lycotoxin-Ls1d (86 aa).

The first 20 residues, 1–20, serve as a signal peptide directing secretion; that stretch reads MNSKIFAVLLLLAFLSCVLS. The WAP domain occupies 21 to 66; sequence DQYCPKSSITACKKMNIRNDCCKDDDCTGGSWCCATPCGNFCKYPT. Intrachain disulfides connect Cys24–Cys54, Cys32–Cys58, Cys41–Cys53, Cys42–Cys80, and Cys47–Cys62.

This sequence belongs to the venom protein 11 family. 01 (wap-1) subfamily. Post-translationally, contains 5 disulfide bonds. In terms of tissue distribution, expressed by the venom gland.

It is found in the secreted. Has antibacterial activity. The chain is U15-lycotoxin-Ls1d from Lycosa singoriensis (Wolf spider).